Consider the following 344-residue polypeptide: Probable Delta(7)-sterol 5(6)-desaturase (344 aa).

3 consecutive transmembrane segments (helical) span residues 76–96 (LSLFLILWLFGLVTYYVFASL), 123–143 (QTNAALPVMAFFTFPFLVAEV), and 160–180 (WYDFFQFPLFIMFTDFGIYWI). Positions 167-292 (PLFIMFTDFG…FTTLWDRLGG (126 aa)) constitute a Fatty acid hydroxylase domain. The short motif at 181–185 (HRGLH) is the Histidine box-1 element. Positions 194–198 (HKPHH) match the Histidine box-2 motif. Residues 224 to 244 (HIFPFIFPLQKMAYVGLFVFI) form a helical membrane-spanning segment. The Histidine box-3 motif lies at 269–273 (HSVHH).

It belongs to the sterol desaturase family. Requires Fe cation as cofactor.

Its subcellular location is the endoplasmic reticulum membrane. The enzyme catalyses a Delta(7)-sterol + 2 Fe(II)-[cytochrome b5] + O2 + 2 H(+) = a Delta(5),Delta(7)-sterol + 2 Fe(III)-[cytochrome b5] + 2 H2O. It functions in the pathway steroid metabolism; ergosterol biosynthesis; ergosterol from zymosterol: step 3/5. Its function is as follows. Catalyzes the introduction of a C-5 double bond in the B ring of ergosterol. May contribute to the regulation of ergosterol biosynthesis. This Neurospora crassa (strain ATCC 24698 / 74-OR23-1A / CBS 708.71 / DSM 1257 / FGSC 987) protein is Probable Delta(7)-sterol 5(6)-desaturase.